The chain runs to 441 residues: Protein dcd1A (441 aa).

The N-terminal stretch at 1–23 is a signal peptide; it reads MKIFNKLIFLIIQCILIISVTNA. N-linked (GlcNAc...) asparagine glycosylation is found at Asn-45, Asn-261, Asn-308, and Asn-419.

It is found in the secreted. This is Protein dcd1A (dcd1A) from Dictyostelium discoideum (Social amoeba).